We begin with the raw amino-acid sequence, 146 residues long: Hemoglobin subunit beta-1 (146 aa).

The Globin domain occupies 2-146; the sequence is GLTAHDRQLI…IADALGKGYH (145 aa). Heme b-binding residues include His63 and His92.

The protein belongs to the globin family. Heterotetramer of two alpha chains and two beta chains. In terms of tissue distribution, red blood cells.

In terms of biological role, involved in oxygen transport from the lung to the various peripheral tissues. In Xenopus laevis (African clawed frog), this protein is Hemoglobin subunit beta-1 (hbb1).